A 933-amino-acid chain; its full sequence is Bromodomain testis-specific protein (933 aa).

The interval 1–21 (MSMSSRHLHSSIVNPPPPEYI) is disordered. Residues 28–134 (RLTNQLQYLE…KVFMEKIAEM (107 aa)) form the Bromo 1 domain. Positions 214-225 (KGIKRKADTTTP) match the Nuclear localization signal motif. Residues 235-263 (ESSPTLSEPKPNKILSGTEKTRSAETSAV) are disordered. The region spanning 278–385 (NQICEQLKHC…DVFEGMFAKI (108 aa)) is the Bromo 2 domain. 3 disordered regions span residues 398–425 (RYKTSTEESSSSSSSEQSSSSDSEDERA), 576–610 (KPSSIKSLKSKEQLNKEKKQELEKRLRDVSGQLSS), and 627–662 (GGPSRLSESSTSSSASDVSNSSDSSSSDSSDSESAT). Residues 404-418 (EESSSSSSSEQSSSS) are compositionally biased toward low complexity. Residues 423-448 (ERAQHLALLQEQLRAVQEQLKALTET) are a coiled coil. Positions 495–577 (VSDEEEDVKP…VCLRKRPKKP (83 aa)) constitute an NET domain. The span at 584–603 (KSKEQLNKEKKQELEKRLRD) shows a compositional bias: basic and acidic residues. A compositionally biased stretch (low complexity) spans 630–660 (SRLSESSTSSSASDVSNSSDSSSSDSSDSES). The stretch at 829–917 (AKEERERALK…RREAMAGTID (89 aa)) forms a coiled coil.

It belongs to the BET family.

The protein localises to the nucleus. Its function is as follows. Testis-specific chromatin protein that specifically binds histone H4 acetylated at 'Lys-5' and 'Lys-8' (H4K5ac and H4K8ac, respectively) and plays a key role in spermatogenesis. Required in late pachytene spermatocytes: plays a role in meiotic and post-meiotic cells by binding to acetylated histones at the promoter of specific meiotic and post-meiotic genes, facilitating their activation at the appropriate time. In the post-meiotic phase of spermatogenesis, binds to hyperacetylated histones and participates in their general removal from DNA. Also recognizes and binds a subset of butyrylated histones: able to bind histone H4 butyrylated at 'Lys-8' (H4K8ac), while it is not able to bind H4 butyrylated at 'Lys-5' (H4K5ac). This Xenopus tropicalis (Western clawed frog) protein is Bromodomain testis-specific protein (brdt).